A 544-amino-acid chain; its full sequence is Membrane protein insertase YidC (544 aa).

5 consecutive transmembrane segments (helical) span residues 6–26, 343–363, 418–438, 456–476, and 497–517; these read NLLL…WETD, KFLH…TFIV, LGGC…YYML, LSAQ…MFFI, and PVIF…YYIV.

It belongs to the OXA1/ALB3/YidC family. Type 1 subfamily. As to quaternary structure, interacts with the Sec translocase complex via SecD. Specifically interacts with transmembrane segments of nascent integral membrane proteins during membrane integration.

The protein localises to the cell inner membrane. Required for the insertion and/or proper folding and/or complex formation of integral membrane proteins into the membrane. Involved in integration of membrane proteins that insert both dependently and independently of the Sec translocase complex, as well as at least some lipoproteins. Aids folding of multispanning membrane proteins. This Pectobacterium atrosepticum (strain SCRI 1043 / ATCC BAA-672) (Erwinia carotovora subsp. atroseptica) protein is Membrane protein insertase YidC.